We begin with the raw amino-acid sequence, 153 residues long: Ubiquitin-conjugating enzyme E2 13 (153 aa).

The 147-residue stretch at 3 to 149 (SLPKRIIKET…AREWTKLYAK (147 aa)) folds into the UBC core domain. The active-site Glycyl thioester intermediate is C87. K92 is covalently cross-linked (Glycyl lysine isopeptide (Lys-Gly) (interchain with G-Cter in ubiquitin)).

Belongs to the ubiquitin-conjugating enzyme family. As to quaternary structure, heterodimer with MMS2.

The enzyme catalyses S-ubiquitinyl-[E1 ubiquitin-activating enzyme]-L-cysteine + [E2 ubiquitin-conjugating enzyme]-L-cysteine = [E1 ubiquitin-activating enzyme]-L-cysteine + S-ubiquitinyl-[E2 ubiquitin-conjugating enzyme]-L-cysteine.. It functions in the pathway protein modification; protein ubiquitination. Functionally, has a role in the DNA error-free postreplication repair (PRR) pathway. The UBC13/MMS2 heterodimer catalyzes the synthesis of non-canonical poly-ubiquitin chains that are linked through 'Lys-63'. The chain is Ubiquitin-conjugating enzyme E2 13 (UBC13) from Saccharomyces cerevisiae (strain ATCC 204508 / S288c) (Baker's yeast).